A 73-amino-acid polypeptide reads, in one-letter code: Excelsatoxin A (73 aa).

The N-terminal stretch at 1 to 20 is a signal peptide; sequence MRFALVAAITIALLVAGSVA. A propeptide spanning residues 21–37 is cleaved from the precursor; it reads DESSEDIDNIVIKTPLD. 3 disulfides stabilise this stretch: Cys-41/Cys-58, Cys-46/Cys-60, and Cys-54/Cys-69.

It belongs to the gympietide family. In terms of tissue distribution, expressed in trichomes, that are stiff epidermal hairs located on the surface of petioles and leaves. Not expressed in other aerial parts.

The protein localises to the secreted. Functionally, neurotoxin certainly responsible for the defensive, persistent, and painful stings of the giant stinging tree. Inhibits inactivation of Nav1.7/SCN9A sodium channel in sensory neurons by directly interacting with TMEM233, a newly described Nav-interacting protein. Has virtually no effect on Nav1.7/SCN9A function in heterologous expression systems and in neurons that do not express TMEM233. Also weakly but significantly affects Nav1.8/SCN10A. Coexpression of TMEM233 with Nav also confers ExTxA sensitivity to Nav1.1-Nav1.6. On the Nav1.7/SCN9A channel, causes a significant hyperpolarizing shift in the voltage dependence of activation. Its effects on Nav currents are irreversible, with no apparent reduction in activity even after repeated wash steps over 30 minutes. Does not show activity on Nav1.9/SCN11A. Does not show insecticidal activities. In vivo, induces nocifensive behavior in mice (licking or biting and shaking or lifting of the affected paw) lasting for approximately 1 hour. This is Excelsatoxin A from Dendrocnide excelsa (Giant stinging tree).